The chain runs to 66 residues: Small ribosomal subunit protein bS21 (66 aa).

This sequence belongs to the bacterial ribosomal protein bS21 family.

The protein is Small ribosomal subunit protein bS21 of Persephonella marina (strain DSM 14350 / EX-H1).